The primary structure comprises 623 residues: Interferon-induced GTP-binding protein Mx3 (623 aa).

The 274-residue stretch at 31 to 304 folds into the Dynamin-type G domain; that stretch reads DLALPAIAVI…LVHHIEKSLP (274 aa). A G1 motif region spans residues 41–48; sequence GDQSSGKS. GTP is bound at residue 41-48; the sequence is GDQSSGKS. Residues 66–68 are G2 motif; sequence VTR. The tract at residues 142–145 is G3 motif; that stretch reads DLPG. GTP-binding positions include 142–146 and 211–214; these read DLPGI and TKPD. Residues 211 to 214 form a G4 motif region; sequence TKPD. The G5 motif stretch occupies residues 243–246; that stretch reads KCRG. In terms of domain architecture, GED spans 537 to 623; that stretch reads LQEMMLHLKS…MKARSYLVEF (87 aa).

This sequence belongs to the TRAFAC class dynamin-like GTPase superfamily. Dynamin/Fzo/YdjA family.

Its subcellular location is the cytoplasm. In terms of biological role, does not inhibit strain RB-1 of the fish pathogen, infectious hematopoietic necrosis virus (IHNV). The sequence is that of Interferon-induced GTP-binding protein Mx3 from Oncorhynchus mykiss (Rainbow trout).